The primary structure comprises 183 residues: BLOC-1-related complex subunit 8 homolog (183 aa).

The interval 152–183 (MIGPGTATGRTEAQAATSSNPGELQRSYTTLH) is disordered. Over residues 159 to 183 (TGRTEAQAATSSNPGELQRSYTTLH) the composition is skewed to polar residues.

This sequence belongs to the BORCS8 family.

The protein localises to the lysosome membrane. May participate in the coupling of lysosomes to microtubule plus-end-directed kinesin motor. This chain is BLOC-1-related complex subunit 8 homolog, found in Drosophila melanogaster (Fruit fly).